The primary structure comprises 195 residues: uncharacterized protein (195 aa).

Positions 1–35 (MASSSSAALRPFGTARLTPGRQTGRQTQQQISAPE) are disordered. Residues 20 to 30 (GRQTGRQTQQQ) are compositionally biased toward low complexity. Residues 76 to 184 (GVTVIPRVAR…PASINMALEA (109 aa)) form the MSP domain.

This is an uncharacterized protein from Caenorhabditis elegans.